The chain runs to 343 residues: Dihydroorotate dehydrogenase (quinone) (343 aa).

Residues 61–65 and Thr-85 contribute to the FMN site; that span reads AGLDK. Substrate is bound at residue Lys-65. Substrate is bound at residue 110-114; it reads NRMGF. FMN contacts are provided by Asn-138 and Asn-171. Asn-171 contacts substrate. The active-site Nucleophile is the Ser-174. Asn-176 lines the substrate pocket. FMN contacts are provided by Lys-216 and Thr-244. 245 to 246 provides a ligand contact to substrate; the sequence is NT. Residues Gly-267, Gly-296, and 317–318 contribute to the FMN site; that span reads YS.

Belongs to the dihydroorotate dehydrogenase family. Type 2 subfamily. Monomer. The cofactor is FMN.

It is found in the cell membrane. It catalyses the reaction (S)-dihydroorotate + a quinone = orotate + a quinol. Its pathway is pyrimidine metabolism; UMP biosynthesis via de novo pathway; orotate from (S)-dihydroorotate (quinone route): step 1/1. Its function is as follows. Catalyzes the conversion of dihydroorotate to orotate with quinone as electron acceptor. The polypeptide is Dihydroorotate dehydrogenase (quinone) (Pseudomonas syringae pv. tomato (strain ATCC BAA-871 / DC3000)).